The sequence spans 501 residues: MQVQKLPTGIEGFDDVCQGGLPTARSTLVSGTSGTGKTVFSLQYLHHGICHFDEPGVFVTFEESPLDIIRNAGSFGWDLQELINQDKLFVLDASPDPDGQDVAGNFDLSGLIERISYAIKKYKAKRVAIDSMTAVFQQYDAVYVVRREIFRLIARLKEIGVTTVMTSERIDEYGPIARYGVEEFVSDNVVILRNVLESEKRRRTVEVLKLRGTTHMKGEFPFTMGAEGITVFALGAMRLTQRSSNIRISSGVPDLDDMCGGGYFQDSIILATGATGTGKTMLVSKFIEDAYRNQERAIIFAYEESRAQLLRNATSWGIDFEQMEADGLLKIICAYPESTGLEDHLQIIKTEITEFKPSRMAIDSLSALARGVSLNAFRQFVIGVTGYAKQEEIAGFFTNTAEEFMGSHSITDSHISTITDTILLLQYVEIRGEMARAINVFKMRGSWHDKRIREFIITNEGPEIKDSFTNFEQIFSGAPHRISGEDSISGVFKSLDKREKK.

2 KaiC domains span residues 1-232 and 246-501; these read MQVQ…ITVF and IRIS…REKK. ATP contacts are provided by glycine 34, threonine 35, glycine 36, lysine 37, threonine 38, serine 74, lysine 209, leucine 210, arginine 211, threonine 213, histidine 215, threonine 275, glycine 276, threonine 277, glycine 278, lysine 279, and threonine 280. Threonine 38 is a Mg(2+) binding site. Mg(2+) is bound by residues threonine 280 and glutamate 303. Tryptophan 316 provides a ligand contact to ATP. Serine 416 is modified (phosphoserine; by autocatalysis). Residue threonine 417 is modified to Phosphothreonine; by autocatalysis. ATP-binding residues include arginine 436, lysine 442, methionine 443, arginine 444, serine 446, histidine 448, and lysine 450.

The protein belongs to the KaiC family. In terms of assembly, homohexamer; hexamerization is dependent on ATP-binding. Component of the KaiBC complex. KaiC interacts with SasA, activating its autokinase function and leading to RpaA activation. The cofactor is Mg(2+). In terms of processing, phosphorylated on serine and threonine residues by autocatalysis. Has a 4 step phosphorylation cycle; the autokinase acts first on Thr-417, then Ser-416. When Ser-416 is modified KaiC switches to an autophosphatase mode, acting first on phospho-Thr-417 then phospho-Ser-416.

It carries out the reaction L-seryl-[protein] + ATP = O-phospho-L-seryl-[protein] + ADP + H(+). The enzyme catalyses L-threonyl-[protein] + ATP = O-phospho-L-threonyl-[protein] + ADP + H(+). The catalysed reaction is ATP + H2O = ADP + phosphate + H(+). In terms of biological role, central component of the KaiBC oscillator complex, which constitutes the main circadian regulator in cyanobacteria. Its composition changes during the circadian cycle to control KaiC phosphorylation. Autophosphorylates and has a weak ATPase activity; ATPase activity defines the circadian period. In Prochlorococcus marinus (strain SARG / CCMP1375 / SS120), this protein is Circadian clock oscillator protein KaiC.